The primary structure comprises 124 residues: Small ribosomal subunit protein uS12 (124 aa).

Asp89 is modified (3-methylthioaspartic acid). The disordered stretch occupies residues 104–124; it reads TAGVENRKQSRSKYGAKRPKK. Basic residues predominate over residues 112-124; the sequence is QSRSKYGAKRPKK.

Belongs to the universal ribosomal protein uS12 family. Part of the 30S ribosomal subunit. Contacts proteins S8 and S17. May interact with IF1 in the 30S initiation complex.

In terms of biological role, with S4 and S5 plays an important role in translational accuracy. Interacts with and stabilizes bases of the 16S rRNA that are involved in tRNA selection in the A site and with the mRNA backbone. Located at the interface of the 30S and 50S subunits, it traverses the body of the 30S subunit contacting proteins on the other side and probably holding the rRNA structure together. The combined cluster of proteins S8, S12 and S17 appears to hold together the shoulder and platform of the 30S subunit. The protein is Small ribosomal subunit protein uS12 of Pseudothermotoga lettingae (strain ATCC BAA-301 / DSM 14385 / NBRC 107922 / TMO) (Thermotoga lettingae).